A 201-amino-acid polypeptide reads, in one-letter code: Recombination protein RecR (201 aa).

A C4-type zinc finger spans residues 60-75; sequence CSCCGNVDTIDPCTVC. The 96-residue stretch at 83 to 178 folds into the Toprim domain; sequence SMIIVVEDVS…KTTRLAHGVP (96 aa).

This sequence belongs to the RecR family.

Its function is as follows. May play a role in DNA repair. It seems to be involved in an RecBC-independent recombinational process of DNA repair. It may act with RecF and RecO. The sequence is that of Recombination protein RecR from Allorhizobium ampelinum (strain ATCC BAA-846 / DSM 112012 / S4) (Agrobacterium vitis (strain S4)).